The primary structure comprises 346 residues: Elongation factor Ts (346 aa).

An involved in Mg(2+) ion dislocation from EF-Tu region spans residues 80–83; that stretch reads TDFV.

This sequence belongs to the EF-Ts family.

The protein localises to the cytoplasm. Associates with the EF-Tu.GDP complex and induces the exchange of GDP to GTP. It remains bound to the aminoacyl-tRNA.EF-Tu.GTP complex up to the GTP hydrolysis stage on the ribosome. This chain is Elongation factor Ts, found in Streptococcus thermophilus (strain CNRZ 1066).